A 278-amino-acid chain; its full sequence is Urease accessory protein UreD (278 aa).

The protein belongs to the UreD family. In terms of assembly, ureD, UreF and UreG form a complex that acts as a GTP-hydrolysis-dependent molecular chaperone, activating the urease apoprotein by helping to assemble the nickel containing metallocenter of UreC. The UreE protein probably delivers the nickel.

It is found in the cytoplasm. Its function is as follows. Required for maturation of urease via the functional incorporation of the urease nickel metallocenter. The protein is Urease accessory protein UreD of Blochmanniella pennsylvanica (strain BPEN).